The sequence spans 167 residues: Large ribosomal subunit protein uL10 (167 aa).

Belongs to the universal ribosomal protein uL10 family. As to quaternary structure, part of the ribosomal stalk of the 50S ribosomal subunit. The N-terminus interacts with L11 and the large rRNA to form the base of the stalk. The C-terminus forms an elongated spine to which L12 dimers bind in a sequential fashion forming a multimeric L10(L12)X complex.

Functionally, forms part of the ribosomal stalk, playing a central role in the interaction of the ribosome with GTP-bound translation factors. This Psychromonas ingrahamii (strain DSM 17664 / CCUG 51855 / 37) protein is Large ribosomal subunit protein uL10.